A 163-amino-acid chain; its full sequence is Photosystem II extrinsic protein V (163 aa).

A signal peptide spans 1–26 (MLKRSSWLATLLGLLTVASVSTIVYA). Heme c is bound by residues Cys-63, Cys-66, His-67, and His-118.

Belongs to the cytochrome c family. PsbV subfamily. In terms of assembly, PSII is composed of 1 copy each of membrane proteins PsbA, PsbB, PsbC, PsbD, PsbE, PsbF, PsbH, PsbI, PsbJ, PsbK, PsbL, PsbM, PsbT, PsbY, PsbZ, Psb30/Ycf12, at least 3 peripheral proteins of the oxygen-evolving complex and a large number of cofactors. It forms dimeric complexes. The extrinsic subunits in red algae are PsbO (OEC33), PsbQ', cytochrome c-550 and PsbU. Requires heme c as cofactor.

The protein localises to the plastid. The protein resides in the chloroplast thylakoid membrane. In terms of biological role, one of the extrinsic, lumenal subunits of photosystem II (PSII). PSII is a light-driven water plastoquinone oxidoreductase, using light energy to abstract electrons from H(2)O, generating a proton gradient subsequently used for ATP formation. The extrinsic proteins stabilize the structure of photosystem II oxygen-evolving complex (OEC), the ion environment of oxygen evolution and protect the OEC against heat-induced inactivation. The sequence is that of Photosystem II extrinsic protein V from Porphyra purpurea (Red seaweed).